We begin with the raw amino-acid sequence, 221 residues long: uncharacterized protein (221 aa).

This is an uncharacterized protein from Sinorhizobium fredii (strain NBRC 101917 / NGR234).